Reading from the N-terminus, the 212-residue chain is ATP-dependent dethiobiotin synthetase BioD (212 aa).

13-18 (GVGKTV) serves as a coordination point for ATP. Thr17 is a binding site for Mg(2+). The active site involves Lys33. Glu100 provides a ligand contact to Mg(2+). Residues 100–103 (EGAG) and 184–186 (PHL) each bind ATP.

This sequence belongs to the dethiobiotin synthetase family. In terms of assembly, homodimer. Mg(2+) serves as cofactor.

It is found in the cytoplasm. The enzyme catalyses (7R,8S)-7,8-diammoniononanoate + CO2 + ATP = (4R,5S)-dethiobiotin + ADP + phosphate + 3 H(+). The protein operates within cofactor biosynthesis; biotin biosynthesis; biotin from 7,8-diaminononanoate: step 1/2. Catalyzes a mechanistically unusual reaction, the ATP-dependent insertion of CO2 between the N7 and N8 nitrogen atoms of 7,8-diaminopelargonic acid (DAPA, also called 7,8-diammoniononanoate) to form a ureido ring. This is ATP-dependent dethiobiotin synthetase BioD from Rhodopseudomonas palustris (strain BisB5).